The chain runs to 419 residues: Serine hydroxymethyltransferase (419 aa).

(6S)-5,6,7,8-tetrahydrofolate-binding positions include Leu-118 and 122–124; that span reads GHL. Lys-227 carries the N6-(pyridoxal phosphate)lysine modification.

It belongs to the SHMT family. In terms of assembly, homodimer. It depends on pyridoxal 5'-phosphate as a cofactor.

It localises to the cytoplasm. It carries out the reaction (6R)-5,10-methylene-5,6,7,8-tetrahydrofolate + glycine + H2O = (6S)-5,6,7,8-tetrahydrofolate + L-serine. It participates in one-carbon metabolism; tetrahydrofolate interconversion. It functions in the pathway amino-acid biosynthesis; glycine biosynthesis; glycine from L-serine: step 1/1. Catalyzes the reversible interconversion of serine and glycine with tetrahydrofolate (THF) serving as the one-carbon carrier. This reaction serves as the major source of one-carbon groups required for the biosynthesis of purines, thymidylate, methionine, and other important biomolecules. Also exhibits THF-independent aldolase activity toward beta-hydroxyamino acids, producing glycine and aldehydes, via a retro-aldol mechanism. The polypeptide is Serine hydroxymethyltransferase (Chloroflexus aurantiacus (strain ATCC 29364 / DSM 637 / Y-400-fl)).